A 156-amino-acid chain; its full sequence is Ribonuclease H (156 aa).

Positions 3 to 144 (ELKLIHIFTD…CDVLARTAAE (142 aa)) constitute an RNase H type-1 domain. Positions 12, 50, 72, and 136 each coordinate Mg(2+).

This sequence belongs to the RNase H family. Monomer. The cofactor is Mg(2+).

The protein localises to the cytoplasm. The enzyme catalyses Endonucleolytic cleavage to 5'-phosphomonoester.. Endonuclease that specifically degrades the RNA of RNA-DNA hybrids. The protein is Ribonuclease H of Shewanella baltica (strain OS223).